We begin with the raw amino-acid sequence, 374 residues long: MSVALFCGPPPAVSFGCKDGRGRKGMVRSKDIVRQTVKPPAHACRLIGWNKYPGSVVPTNSSLSPSPTALDDEIELDLSPFLIIYKDGRIERLKGTTVIPACPEVATKDVIIDPATGVSVRLYLPNVVDLPSKKLPVLVYFHGGGFVIENTGSPNYHNYLTLLAAKSGLLIVSVNYRLAPEHPIPASFDDCMAGFNWVVSHSAGPAPEPWLARHGDLTQILISGDSAGGTVTHYVLLRADAGVIEGAALVHPYFLGSKRLENQTEEDFEFHEKLWRLSTPDTEGLDDPLINPLAPGAPSLAGLKCKRAVVFVAELDFLVERGRMYYDALVKSGWGGEAELVHQKGVGHVFHLSDYSGDVSVDMMAKMVAFLRGE.

Residues 1-68 (MSVALFCGPP…TNSSLSPSPT (68 aa)) constitute an amyloplast transit peptide. Residue serine 226 is the Acyl-ester intermediate of the active site. Active-site charge relay system residues include aspartate 316 and histidine 348.

The protein belongs to the AB hydrolase superfamily. Homodimer. As to expression, highly expressed in pistil and bulb scales. Lower expression in stem, and barely detected in root, leaf, petal and stamen.

The protein resides in the plastid. It is found in the amyloplast. The enzyme catalyses 6-tuliposide A = tulipalin A + D-glucose. Lactone-forming carboxylesterases, specifically catalyzing intramolecular transesterification, but not hydrolysis. Involved in the biosynthesis of tulipalins, defensive chemicals that show antimicrobial activities against a broad range of strains of bacteria and fungi. Substrates are 6-tuliposide A &gt; 6-tuliposide B. The protein is Tuliposide A-converting enzyme b2, amyloplastic (TCEA-B2) of Tulipa gesneriana (Garden tulip).